A 313-amino-acid polypeptide reads, in one-letter code: Synaptophysin (313 aa).

Residues Met-1–Pro-25 lie on the Cytoplasmic side of the membrane. The MARVEL domain occupies Val-21 to Gly-227. The chain crosses the membrane as a helical span at residues Leu-26 to Gly-49. The Vesicular segment spans residues Glu-50–Phe-106. Asn-59 carries an N-linked (GlcNAc...) asparagine glycan. Tyr-81 bears the Phosphotyrosine mark. Asn-99 carries an N-linked (GlcNAc...) asparagine glycan. A helical transmembrane segment spans residues Phe-107–Asn-130. At Lys-131–Lys-137 the chain is on the cytoplasmic side. The chain crosses the membrane as a helical span at residues Gly-138–Ala-161. Residues Lys-162–Ser-199 are Vesicular-facing. A helical transmembrane segment spans residues Gly-200–Phe-223. Residues Lys-224–Met-313 lie on the Cytoplasmic side of the membrane. Residues Gly-238–Met-313 are disordered. The segment covering Ala-253–Gly-263 has biased composition (gly residues). A repeats, Gly/Tyr-rich region spans residues Gly-254–Gly-304. Over residues Pro-264–Ser-283 the composition is skewed to low complexity. The segment covering Ser-284 to Pro-302 has biased composition (gly residues).

It belongs to the synaptophysin/synaptobrevin family. In terms of assembly, homohexamer or homotetramer. Interacts with SRCIN1. Interacts with VAMP2; the interaction is inhibited by interaction of VAPM2 with SEPT8. In terms of processing, ubiquitinated; mediated by SIAH1 or SIAH2 and leading to its subsequent proteasomal degradation. Phosphorylated by SRC. As to expression, characteristic of a type of small (30-80 nm) neurosecretory vesicles, including presynaptic vesicles, but also vesicles of various neuroendocrine cells of both neuronal and epithelial phenotype.

The protein resides in the cytoplasmic vesicle. The protein localises to the secretory vesicle. It is found in the synaptic vesicle membrane. It localises to the synapse. Its subcellular location is the synaptosome. Its function is as follows. Possibly involved in structural functions as organizing other membrane components or in targeting the vesicles to the plasma membrane. Involved in the regulation of short-term and long-term synaptic plasticity. The chain is Synaptophysin (SYP) from Bos taurus (Bovine).